A 134-amino-acid polypeptide reads, in one-letter code: Small ribosomal subunit protein uS9c (134 aa).

The protein belongs to the universal ribosomal protein uS9 family.

Its subcellular location is the plastid. The protein localises to the chloroplast. This Euglena gracilis protein is Small ribosomal subunit protein uS9c (rps9).